Reading from the N-terminus, the 488-residue chain is Stromelysin-3 (488 aa).

An N-terminal signal peptide occupies residues 1–31 (MAPAAWLRSAAARALLPPMLLLLLQPPPLLA). Residues 32–97 (RALPPDAHHL…GLSARNRQKR (66 aa)) constitute a propeptide, activation peptide. A disordered region spans residues 41-93 (LHAERRGPQPWHAALPSSPAPAPATQEAPRPASSLRPPRCGVPDPSDGLSARN). A compositionally biased stretch (low complexity) spans 50–79 (PWHAALPSSPAPAPATQEAPRPASSLRPPR). A Cysteine switch motif is present at residues 78–85 (PRCGVPDP). Zn(2+)-binding residues include cysteine 80 and aspartate 166. Positions 171, 172, 174, and 176 each coordinate Ca(2+). Histidine 179, histidine 192, and histidine 215 together coordinate Zn(2+). Glutamate 216 is a catalytic residue. Zn(2+)-binding residues include histidine 219 and histidine 225. 4 Hemopexin repeats span residues 291–339 (PDAC…WQGL), 340–382 (PSPV…ELGL), 384–432 (RFPV…WRGV), and 433–480 (PSEI…FFGC). Cysteine 294 and cysteine 480 are joined by a disulfide.

The protein belongs to the peptidase M10A family. The cofactor is Ca(2+). Requires Zn(2+) as cofactor. Post-translationally, the precursor is cleaved by a furin endopeptidase. Specifically expressed in stromal cells of breast carcinomas.

The protein resides in the secreted. The protein localises to the extracellular space. Its subcellular location is the extracellular matrix. Functionally, may play an important role in the progression of epithelial malignancies. This is Stromelysin-3 (MMP11) from Homo sapiens (Human).